The primary structure comprises 239 residues: Lysophospholipase-like protein 1 (239 aa).

N-acetylalanine is present on A2. Catalysis depends on charge relay system residues S125, D180, and H212.

It belongs to the AB hydrolase superfamily. AB hydrolase 2 family.

It localises to the cytoplasm. Its subcellular location is the cytosol. The catalysed reaction is S-hexadecanoyl-L-cysteinyl-[protein] + H2O = L-cysteinyl-[protein] + hexadecanoate + H(+). In terms of biological role, palmitoyl thioesterase that catalyzes depalmitoylation of CGAS and KCNMA1. Acts as a regulator of innate immunity by mediating depalmitoylation of CGAS, thereby preventing CGAS homodimerization and cyclic GMP-AMP synthase activity. Does not exhibit phospholipase nor triacylglycerol lipase activity, able to hydrolyze only short chain substrates due to its shallow active site. This is Lysophospholipase-like protein 1 from Mus musculus (Mouse).